The sequence spans 188 residues: Large ribosomal subunit protein eL18 (188 aa).

A Glycyl lysine isopeptide (Lys-Gly) (interchain with G-Cter in SUMO2) cross-link involves residue lysine 119. Serine 130 bears the Phosphoserine mark. Residues 151-188 (HFGKAPGTPHSHTKPYVRSKGRKFERARGRRASRGYKN) form a disordered region. Phosphothreonine is present on threonine 158. Composition is skewed to basic residues over residues 161-171 (SHTKPYVRSKG) and 178-188 (RGRRASRGYKN). Lysine 164 participates in a covalent cross-link: Glycyl lysine isopeptide (Lys-Gly) (interchain with G-Cter in SUMO2).

The protein belongs to the eukaryotic ribosomal protein eL18 family. As to quaternary structure, component of the large ribosomal subunit.

The protein localises to the cytoplasm. It is found in the cytosol. The protein resides in the rough endoplasmic reticulum. In terms of biological role, component of the large ribosomal subunit. The ribosome is a large ribonucleoprotein complex responsible for the synthesis of proteins in the cell. The protein is Large ribosomal subunit protein eL18 (RPL18) of Homo sapiens (Human).